The following is a 173-amino-acid chain: NADH-quinone oxidoreductase subunit I 1 (173 aa).

4Fe-4S ferredoxin-type domains follow at residues Ile-41–Ala-73 and Glu-83–Asp-112. Cys-53, Cys-56, Cys-59, Cys-63, Cys-92, Cys-95, Cys-98, and Cys-102 together coordinate [4Fe-4S] cluster.

The protein belongs to the complex I 23 kDa subunit family. In terms of assembly, NDH-1 is composed of 14 different subunits. Subunits NuoA, H, J, K, L, M, N constitute the membrane sector of the complex. Requires [4Fe-4S] cluster as cofactor.

The protein localises to the cell inner membrane. It carries out the reaction a quinone + NADH + 5 H(+)(in) = a quinol + NAD(+) + 4 H(+)(out). NDH-1 shuttles electrons from NADH, via FMN and iron-sulfur (Fe-S) centers, to quinones in the respiratory chain. The immediate electron acceptor for the enzyme in this species is believed to be ubiquinone. Couples the redox reaction to proton translocation (for every two electrons transferred, four hydrogen ions are translocated across the cytoplasmic membrane), and thus conserves the redox energy in a proton gradient. In Rhodopseudomonas palustris (strain BisA53), this protein is NADH-quinone oxidoreductase subunit I 1.